The chain runs to 197 residues: Imidazoleglycerol-phosphate dehydratase (197 aa).

It belongs to the imidazoleglycerol-phosphate dehydratase family.

It localises to the cytoplasm. It carries out the reaction D-erythro-1-(imidazol-4-yl)glycerol 3-phosphate = 3-(imidazol-4-yl)-2-oxopropyl phosphate + H2O. It participates in amino-acid biosynthesis; L-histidine biosynthesis; L-histidine from 5-phospho-alpha-D-ribose 1-diphosphate: step 6/9. The chain is Imidazoleglycerol-phosphate dehydratase from Pseudomonas fluorescens (strain Pf0-1).